The sequence spans 279 residues: Tryptophan 2,3-dioxygenase (279 aa).

Substrate-binding positions include 48–52 (FIIQH), Tyr-110, and Arg-114. His-237 contacts heme. Thr-251 provides a ligand contact to substrate.

It belongs to the tryptophan 2,3-dioxygenase family. In terms of assembly, homotetramer. Heme serves as cofactor.

The enzyme catalyses L-tryptophan + O2 = N-formyl-L-kynurenine. Its pathway is amino-acid degradation; L-tryptophan degradation via kynurenine pathway; L-kynurenine from L-tryptophan: step 1/2. Its function is as follows. Heme-dependent dioxygenase that catalyzes the oxidative cleavage of the L-tryptophan (L-Trp) pyrrole ring and converts L-tryptophan to N-formyl-L-kynurenine. Catalyzes the oxidative cleavage of the indole moiety. This chain is Tryptophan 2,3-dioxygenase, found in Bradyrhizobium sp. (strain BTAi1 / ATCC BAA-1182).